The chain runs to 583 residues: SHC-transforming protein 1 (583 aa).

The residue at position 1 (M1) is an N-acetylmethionine. Disordered regions lie at residues M1–E92 and K113–H137. Residues E16 to P44 show a composition bias toward low complexity. The residue at position 36 (S36) is a Phosphoserine. Phosphoserine is present on S139. An N6-acetyllysine modification is found at K154. A PID domain is found at M156–E339. Positions E340–P487 are CH1. Residues Y349 and Y350 each carry the phosphotyrosine modification. The tract at residues A372–C416 is disordered. Y427 is subject to Phosphotyrosine. S453 is modified (phosphoserine). Residues W488–V579 enclose the SH2 domain.

In terms of assembly, interacts with CPNE3; this interaction may mediate the binding of CPNE3 with ERBB2. Interacts with the Trk receptors NTRK1, NTRK2 and NTRK3; in a phosphotyrosine-dependent manner. Interacts with the NPXY motif of tyrosine-phosphorylated IGF1R and INSR in vitro via the PID domain. Once activated, binds to GRB2. Interacts with tyrosine-phosphorylated CD3T and DDR2. Interacts with the N-terminal region of APS. Interacts with phosphorylated LRP1 and IRS4. Interacts with INPP5D/SHIP1 and INPPL1/SHIP2. Interacts with ALK, GAB2, GRB7 and KIT. Interacts with PTPN6/SHP (tyrosine phosphorylated). Identified in a complex containing FGFR4, NCAM1, CDH2, PLCG1, FRS2, SRC, SHC1, GAP43 and CTTN. Interacts with FLT4 (tyrosine-phosphorylated). Interacts with EPHB1 and GRB2; activates the MAPK/ERK cascade to regulate cell migration. Interacts with PDGFRB (tyrosine-phosphorylated). Interacts with ERBB4. Interacts with TEK/TIE2 (tyrosine-phosphorylated). Interacts with PTK2/FAK1. Interacts with CEACAM1; this interaction is CEACAM1-phosphorylation-dependent and mediates interaction with EGFR or INSR resulting in decrease coupling of SHC1 to the MAPK3/ERK1-MAPK1/ERK2 pathway. Interacts (via PID domain) with PEAK1 (when phosphorylated). Found in a complex with PPP1CA, PPP1CC, SHC1 and PEAK1. In terms of processing, phosphorylated by activated epidermal growth factor receptor. Phosphorylated in response to KIT signaling. Tyrosine phosphorylated in response to FLT3 and FLT4 signaling and by ligand-activated ALK. Tyrosine phosphorylated by ligand-activated PDGFRB. Tyrosine phosphorylated by TEK/TIE2. May be tyrosine phosphorylated by activated PTK2/FAK1. Tyrosine phosphorylated by activated PTK2B/PYK2. Dephosphorylation by PTPN2 may regulate interaction with GRB2.

The protein localises to the cytoplasm. The protein resides in the cell junction. Its subcellular location is the focal adhesion. Its function is as follows. Signaling adapter that couples activated growth factor receptors to signaling pathways. Participates in a signaling cascade initiated by activated KIT and KITLG/SCF. Participates in signaling downstream of the angiopoietin receptor TEK/TIE2, and plays a role in the regulation of endothelial cell migration and sprouting angiogenesis. The sequence is that of SHC-transforming protein 1 (SHC1) from Pongo abelii (Sumatran orangutan).